Reading from the N-terminus, the 207-residue chain is dITP/XTP pyrophosphatase (207 aa).

7-12 contributes to the substrate binding site; sequence SNNAKK. Residue aspartate 72 is the Proton acceptor of the active site. Residue aspartate 72 coordinates Mg(2+). Substrate-binding positions include serine 73, 155–158, lysine 183, and 188–189; these read FGYD and HR.

The protein belongs to the HAM1 NTPase family. Homodimer. Mg(2+) serves as cofactor.

It carries out the reaction XTP + H2O = XMP + diphosphate + H(+). The enzyme catalyses dITP + H2O = dIMP + diphosphate + H(+). The catalysed reaction is ITP + H2O = IMP + diphosphate + H(+). Functionally, pyrophosphatase that catalyzes the hydrolysis of nucleoside triphosphates to their monophosphate derivatives, with a high preference for the non-canonical purine nucleotides XTP (xanthosine triphosphate), dITP (deoxyinosine triphosphate) and ITP. Seems to function as a house-cleaning enzyme that removes non-canonical purine nucleotides from the nucleotide pool, thus preventing their incorporation into DNA/RNA and avoiding chromosomal lesions. In Corynebacterium diphtheriae (strain ATCC 700971 / NCTC 13129 / Biotype gravis), this protein is dITP/XTP pyrophosphatase.